The following is a 128-amino-acid chain: Sirohydrochlorin cobaltochelatase (128 aa).

H9 serves as the catalytic Proton acceptor. H9 provides a ligand contact to Co(2+). Substrate-binding positions include K43 and F68–H73. H73 serves as a coordination point for Co(2+).

The protein belongs to the CbiX family. CbiXS subfamily. Homotetramer; dimer of dimers.

The catalysed reaction is Co-sirohydrochlorin + 2 H(+) = sirohydrochlorin + Co(2+). The protein operates within cofactor biosynthesis; adenosylcobalamin biosynthesis; cob(II)yrinate a,c-diamide from sirohydrochlorin (anaerobic route): step 1/10. Functionally, catalyzes the insertion of Co(2+) into sirohydrochlorin as part of the anaerobic pathway to cobalamin biosynthesis. This chain is Sirohydrochlorin cobaltochelatase, found in Saccharolobus islandicus (strain Y.G.57.14 / Yellowstone #1) (Sulfolobus islandicus).